Here is a 76-residue protein sequence, read N- to C-terminus: Conotoxin VnMKLT2-013 (76 aa).

An N-terminal signal peptide occupies residues 1 to 23 (MMKLTCVLIIAVLFLTACQLTTA). Residues 24-42 (ETRDEYRAVRSSDEVQNSR) constitute a propeptide that is removed on maturation. The disordered stretch occupies residues 29–49 (YRAVRSSDEVQNSRSTDDCST). 3 disulfides stabilise this stretch: Cys47-Cys58, Cys52-Cys63, and Cys57-Cys72.

Belongs to the conotoxin O1 superfamily. Expressed by the venom duct.

It is found in the secreted. The chain is Conotoxin VnMKLT2-013 from Conus ventricosus (Mediterranean cone).